An 88-amino-acid polypeptide reads, in one-letter code: MDSSVPGGQRTLQKRRNAQLQKEKKANQTPASPRQAGFGGSSSSILKLYTDEANGLRVDPLVVLFLAVAFVFSVVALHVVAKVSGKIF.

A disordered region spans residues 1-41 (MDSSVPGGQRTLQKRRNAQLQKEKKANQTPASPRQAGFGGS). The Cytoplasmic portion of the chain corresponds to 1-60 (MDSSVPGGQRTLQKRRNAQLQKEKKANQTPASPRQAGFGGSSSSILKLYTDEANGLRVDP). A helical membrane pass occupies residues 61–81 (LVVLFLAVAFVFSVVALHVVA).

It belongs to the SEC61-beta family. Heterotrimeric complex composed of SEC61, SEB1 and SSS1.

The protein localises to the endoplasmic reticulum membrane. Functionally, necessary for protein translocation in the endoplasmic reticulum. The sequence is that of Protein transport protein Sec61 subunit beta (SBH1) from Kluyveromyces lactis (strain ATCC 8585 / CBS 2359 / DSM 70799 / NBRC 1267 / NRRL Y-1140 / WM37) (Yeast).